A 181-amino-acid polypeptide reads, in one-letter code: ATP synthase subunit b (181 aa).

Residues 12–32 form a helical membrane-spanning segment; it reads LPAVYDIVWSAVVFVVLLVVI.

The protein belongs to the ATPase B chain family. In terms of assembly, F-type ATPases have 2 components, F(1) - the catalytic core - and F(0) - the membrane proton channel. F(1) has five subunits: alpha(3), beta(3), gamma(1), delta(1), epsilon(1). F(0) has three main subunits: a(1), b(2) and c(10-14). The alpha and beta chains form an alternating ring which encloses part of the gamma chain. F(1) is attached to F(0) by a central stalk formed by the gamma and epsilon chains, while a peripheral stalk is formed by the delta and b chains.

The protein localises to the cell membrane. Its function is as follows. F(1)F(0) ATP synthase produces ATP from ADP in the presence of a proton or sodium gradient. F-type ATPases consist of two structural domains, F(1) containing the extramembraneous catalytic core and F(0) containing the membrane proton channel, linked together by a central stalk and a peripheral stalk. During catalysis, ATP synthesis in the catalytic domain of F(1) is coupled via a rotary mechanism of the central stalk subunits to proton translocation. Component of the F(0) channel, it forms part of the peripheral stalk, linking F(1) to F(0). The sequence is that of ATP synthase subunit b from Clavibacter sepedonicus (Clavibacter michiganensis subsp. sepedonicus).